We begin with the raw amino-acid sequence, 419 residues long: Subtilisin-like protease 2 (419 aa).

The N-terminal stretch at 1–16 is a signal peptide; the sequence is MQLLNFGLLLLPFVAG. Residues 17 to 122 constitute a propeptide that is removed on maturation; it reads DLAPQPEPLL…VHPDQHVYLA (106 aa). Residues 36–122 form the Inhibitor I9 domain; that stretch reads QYIVTLKEGL…VHPDQHVYLA (87 aa). The Peptidase S8 domain maps to 131–419; the sequence is RWGLGYMSSK…IQERKFKLPK (289 aa). Catalysis depends on charge relay system residues Asp-169 and His-201. N-linked (GlcNAc...) asparagine glycans are attached at residues Asn-248, Asn-261, and Asn-348. Ser-357 serves as the catalytic Charge relay system. The N-linked (GlcNAc...) asparagine glycan is linked to Asn-388.

It belongs to the peptidase S8 family.

It localises to the secreted. Secreted subtilisin-like serine protease with keratinolytic activity that contributes to pathogenicity. The protein is Subtilisin-like protease 2 (SUB2) of Arthroderma benhamiae (Trichophyton mentagrophytes).